Reading from the N-terminus, the 95-residue chain is Co-chaperonin GroES (95 aa).

The protein belongs to the GroES chaperonin family. As to quaternary structure, heptamer of 7 subunits arranged in a ring. Interacts with the chaperonin GroEL.

The protein resides in the cytoplasm. Its function is as follows. Together with the chaperonin GroEL, plays an essential role in assisting protein folding. The GroEL-GroES system forms a nano-cage that allows encapsulation of the non-native substrate proteins and provides a physical environment optimized to promote and accelerate protein folding. GroES binds to the apical surface of the GroEL ring, thereby capping the opening of the GroEL channel. This Vesicomyosocius okutanii subsp. Calyptogena okutanii (strain HA) protein is Co-chaperonin GroES.